The chain runs to 508 residues: Protein ultraspiracle (508 aa).

Residues M1–L103 form a modulating region. Disordered regions lie at residues P21–S40 and P55–P92. Residues S24–S35 show a composition bias toward polar residues. S35 is modified (phosphoserine). The segment covering S57 to Q90 has biased composition (low complexity). 2 NR C4-type zinc fingers span residues C104–C124 and C140–C164. The segment at residues C104 to M169 is a DNA-binding region (nuclear receptor). The segment at K170–G223 is hinge. A disordered region spans residues R178–D228. Positions S192–N224 are enriched in gly residues. Residues S239–P498 enclose the NR LBD domain.

It belongs to the nuclear hormone receptor family. NR2 subfamily. In terms of assembly, heterodimer of USP and ECR. Only the heterodimer is capable of high-affinity binding to ecdysone.

The protein localises to the nucleus. Receptor for ecdysone. May be an important modulator of insect metamorphosis. Plays an important part in embryonic and post-embryonic development. Binds to ecdysone response elements (ECRES) such as in the promoter region of s15 chorion gene. The protein is Protein ultraspiracle (usp) of Drosophila melanogaster (Fruit fly).